Consider the following 305-residue polypeptide: UDP-3-O-acyl-N-acetylglucosamine deacetylase (305 aa).

Zn(2+)-binding residues include His78, His237, and Asp241. Residue His264 is the Proton donor of the active site.

This sequence belongs to the LpxC family. It depends on Zn(2+) as a cofactor.

It carries out the reaction a UDP-3-O-[(3R)-3-hydroxyacyl]-N-acetyl-alpha-D-glucosamine + H2O = a UDP-3-O-[(3R)-3-hydroxyacyl]-alpha-D-glucosamine + acetate. Its pathway is glycolipid biosynthesis; lipid IV(A) biosynthesis; lipid IV(A) from (3R)-3-hydroxytetradecanoyl-[acyl-carrier-protein] and UDP-N-acetyl-alpha-D-glucosamine: step 2/6. Functionally, catalyzes the hydrolysis of UDP-3-O-myristoyl-N-acetylglucosamine to form UDP-3-O-myristoylglucosamine and acetate, the committed step in lipid A biosynthesis. This Paraburkholderia phymatum (strain DSM 17167 / CIP 108236 / LMG 21445 / STM815) (Burkholderia phymatum) protein is UDP-3-O-acyl-N-acetylglucosamine deacetylase.